The chain runs to 89 residues: Exodeoxyribonuclease 7 small subunit (89 aa).

The tract at residues 1-23 is disordered; sequence MRPWRCVSMAKAPAAPSSTQPDP.

It belongs to the XseB family. As to quaternary structure, heterooligomer composed of large and small subunits.

The protein resides in the cytoplasm. The catalysed reaction is Exonucleolytic cleavage in either 5'- to 3'- or 3'- to 5'-direction to yield nucleoside 5'-phosphates.. In terms of biological role, bidirectionally degrades single-stranded DNA into large acid-insoluble oligonucleotides, which are then degraded further into small acid-soluble oligonucleotides. The chain is Exodeoxyribonuclease 7 small subunit from Acidovorax sp. (strain JS42).